Reading from the N-terminus, the 765-residue chain is NADPH oxidase 5 (765 aa).

The N-terminal lobe of N-terminal regulatory EF domain stretch occupies residues 1-77 (MNTSGDPAQT…LFDSDRSGTI (77 aa)). The tract at residues 1–161 (MNTSGDPAQT…SCLRESAISL (161 aa)) is N-terminal regulatory EF domain. The Cytoplasmic portion of the chain corresponds to 1–238 (MNTSGDPAQT…RAYWHNHRSQ (238 aa)). 2 EF-hand domains span residues 26–56 (RWLR…ALHV) and 57–92 (KESF…LIHG). Positions 42, 44, 49, 70, 72, 74, 76, 81, and 106 each coordinate Ca(2+). The interval 78–161 (TLQELQEALT…SCLRESAISL (84 aa)) is C-terminal lobe of N-terminal regulatory EF domain. One can recognise an EF-hand 3; atypical; contains an insert of 28 residues domain in the interval 93–156 (SPMDKLKFLF…RTVLQSCLRE (64 aa)). Ile107 is modified (S-nitrosocysteine). Ca(2+)-binding residues include Asp108, Ser138, Ser140, Glu145, Asp178, Asp180, Asn182, and Glu189. The interval 122-141 (GAGAGPHWASSPLGTGSGSI) is disordered. The 36-residue stretch at 165–200 (KLDQLTLALFESADADGNGAITFEELRDELQRFPGV) folds into the EF-hand 4 domain. Residues 239 to 259 (LFCLATYAGLHVLLFGLAASA) form a helical membrane-spanning segment. S-nitrosocysteine is present on Ala246. Residues 260-266 (HRDLGAS) are Extracellular-facing. The helical transmembrane segment at 267-289 (VMVAKGCGQCLNFDCSFIAVLML) threads the bilayer. Residues 290–317 (RRCLTWLRATWLAQVLPLDQNIQFHQLM) are Cytoplasmic-facing. Positions 293–440 (LTWLRATWLA…FLEKAIGLAV (148 aa)) constitute a Ferric oxidoreductase domain. Residues 318-338 (GYVVVGLSLVHTVAHTVNFVL) form a helical membrane-spanning segment. The Extracellular portion of the chain corresponds to 339–362 (QAQAEASPFQFWELLLTTRPGIGW). Residues 363–383 (VHGSASPTGVALLLLLLLMFI) traverse the membrane as a helical segment. Topologically, residues 384–394 (CSSSCIRRSGH) are cytoplasmic. The helical transmembrane segment at 395–417 (FEVFYWTHLSYLLVWLLLIFHGP) threads the bilayer. C-terminal catalytic dehydrogenase domain regions lie at residues 398–719 (FYWT…GRPD) and 416–737 (GPNF…KVQV). The Extracellular portion of the chain corresponds to 418–434 (NFWKWLLVPGILFFLEK). The chain crosses the membrane as a helical span at residues 435 to 455 (AIGLAVSRMAAVCIMEVNLLP). Positions 441–577 (SRMAAVCIME…DGPYGTPTRR (137 aa)) constitute an FAD-binding FR-type domain. At 456–583 (SKVTHLLIKR…PTRRIFASEH (128 aa)) the chain is on the cytoplasmic side. A Phosphoserine; by CaMK2 modification is found at Asp475. His490 is subject to Phosphothreonine; by PKC/PRKCA. Phosphothreonine; by CaMK2 and PKC/PRKCA is present on Ile494. At Pro498 the chain carries Phosphoserine; by CaMK2 and PKC/PRKCA. Asp502 carries the phosphoserine; by CaMK2 modification. Tyr519 carries the post-translational modification S-nitrosocysteine. A helical membrane pass occupies residues 584–604 (AVLIGAGIGITPFASILQSIM). The Extracellular portion of the chain corresponds to 605–765 (YRHQKRKHTC…FGFRFFQENF (161 aa)). Asp659 is subject to Phosphoserine; by CaMK2. Leu694 carries the S-nitrosocysteine modification.

Homooligomer. It depends on FAD as a cofactor. Mg(2+) is required as a cofactor. Post-translationally, phosphorylation at Ser-475 by CaMK2 and at Ser-490, Thr-494 and Ser-498 by PKC/PRKCA positively regulates its catalytic activity. In terms of processing, S-nitrosylation in response to nitric oxide inhibits its catalytic activity. Mainly expressed in pachytene spermatocytes of testis and in lymphocyte-rich areas of spleen and lymph nodes. Also detected in ovary, placenta, pancreas, cardiac fibroblasts. Expressed in B-cells and prostate malignant cells. As to expression, expressed in spleen. Expressed in endothelial cells, pulmonary artery smooth muscle cells and epithelial colorectal adenocarcinoma cells. In terms of tissue distribution, expressed in microvascular endothelial cells (at protein level). Expressed in testis. Expressed in endothelial cells and pulmonary artery smooth muscle cells. Expressed in pulmonary artery smooth muscle cells and epithelial colorectal adenocarcinoma cells. As to expression, expressed in endothelial cells and pulmonary artery smooth muscle cells. In terms of tissue distribution, expressed in microvascular endothelial cells (at protein level).

The protein resides in the endoplasmic reticulum. The protein localises to the cell membrane. The catalysed reaction is NADPH + 2 O2 = 2 superoxide + NADP(+) + H(+). With respect to regulation, activated by calcium which induces conformational changes and interaction between the N-terminal regulatory region and the C-terminal catalytic region. Inhibited by diphenylene iodonium. Functionally, calcium-dependent NADPH oxidase that catalyzes the generation of superoxide from molecular oxygen utilizing NADPH as an electron donor. May play a role in cell growth and apoptosis. Its function is as follows. Calcium-dependent NADPH oxidase that catalyzes the generation of superoxide from molecular oxygen utilizing NADPH as an electron donor. Involved in endothelial generation of reactive oxygen species (ROS), proliferation and angiogenesis and contributes to endothelial response to thrombin. Regulates redox-dependent processes in lymphocytes and spermatozoa. In terms of biological role, calcium-dependent NADPH oxidase that catalyzes the generation of superoxide from molecular oxygen utilizing NADPH as an electron donor. This isoform lacks calcium-binding domains and was showed to present a NADPH oxidase activity in a calcium-independent manner. May be involved in endothelial generation of reactive oxygen species (ROS), proliferation and angiogenesis and contribute to endothelial response to thrombin. However another study showed an absence of oxidase activity. Subject to rapid degradation. Functionally, lacks calcium-dependent NADPH oxidase activity. In Homo sapiens (Human), this protein is NADPH oxidase 5.